A 322-amino-acid chain; its full sequence is Cytochrome c biogenesis protein CcsA (322 aa).

Transmembrane regions (helical) follow at residues 9-29, 44-64, 71-91, 98-118, 143-163, 226-246, 253-273, and 287-307; these read ILTH…LITL, GMIA…IYSG, LYES…VPYF, LTTI…SGLL, MILS…LLVI, VISL…VWAN, WSWD…AIYL, and AIVA…VNLL.

Belongs to the CcmF/CycK/Ccl1/NrfE/CcsA family. In terms of assembly, may interact with Ccs1.

It localises to the plastid. The protein localises to the chloroplast thylakoid membrane. Functionally, required during biogenesis of c-type cytochromes (cytochrome c6 and cytochrome f) at the step of heme attachment. This Helianthus annuus (Common sunflower) protein is Cytochrome c biogenesis protein CcsA.